The primary structure comprises 1111 residues: Probable arabinosyltransferase A (1111 aa).

Helical transmembrane passes span 12-34 (IIRL…VPLL), 205-224 (IAVG…LSAL), 333-355 (VWMR…HWVL), 370-387 (VAVL…LPFN), 394-413 (PLIA…AIAL), 423-445 (AVVA…ALLT), 462-484 (GLLA…VFHS), 530-547 (FPVL…VVLL), 554-576 (GLAS…LLTF), 581-603 (WAIQ…AFAF), 615-637 (TVYI…GWFG), 652-674 (IAGH…LAGG), and 695-717 (FLAT…GSLA). Residues 804-831 (GLVNSDASPNKPNVTFSDSAGTAGGKGP) are disordered. Polar residues predominate over residues 808-823 (SDASPNKPNVTFSDSA).

Belongs to the emb family.

It localises to the cell membrane. Its function is as follows. Arabinosyl transferase responsible for the polymerization of arabinose into the arabinan of arabinogalactan. This chain is Probable arabinosyltransferase A (embA), found in Mycobacterium leprae (strain TN).